Reading from the N-terminus, the 420-residue chain is MLAASFKRQPSQLVRGLGAVLRTPTRIGHVRTMATLKTTDKKAPEDIEGSDTVQIELPESSFESYMLEPPDLSYETSKATLLQMYKDMVIIRRMEMACDALYKAKKIRGFCHLSVGQEAIAVGIENAITKLDSIITSYRCHGFTFMRGASVKAVLAELMGRRAGVSYGKGGSMHLYAPGFYGGNGIVGAQVPLGAGLAFAHQYKNEDACSFTLYGDGASNQGQVFESFNMAKLWNLPVVFCCENNKYGMGTAASRSSAMTEYFKRGQYIPGLKVNGMDILAVYQASKFAKDWCLSGKGPLVLEYETYRYGGHSMSDPGTTYRTRDEIQHMRSKNDPIAGLKMHLIDLGIATEAEVKAYDKSARKYVDEQVELADAAPPPEAKLSILFEDVYVKGTETPTLRGRIPEDTWDFKKQGFASRD.

A mitochondrion-targeting transit peptide spans methionine 1–methionine 33. Histidine 112, tyrosine 138, arginine 139, alanine 177, glycine 185, valine 187, aspartate 216, glycine 217, alanine 218, asparagine 245, and tyrosine 247 together coordinate pyruvate. Thiamine diphosphate is bound by residues tyrosine 138 and arginine 139. Thiamine diphosphate is bound by residues glycine 185, valine 187, aspartate 216, glycine 217, alanine 218, and asparagine 245. Residue aspartate 216 participates in Mg(2+) binding. Mg(2+) contacts are provided by asparagine 245 and tyrosine 247. Position 312 (histidine 312) interacts with thiamine diphosphate. Residue serine 313 is modified to Phosphoserine; by PDK1 and PDK2.

As to quaternary structure, pyruvate dehydrogenase (E1) is a tetramer of 2 alpha and 2 beta subunits. Eukaryotic pyruvate dehydrogenase (PDH) complexes are organized as a core consisting of the oligomeric dihydrolipoamide acetyl-transferase (E2), around which are arranged multiple copies of pyruvate dehydrogenase (E1), dihydrolipoamide dehydrogenase (E3) and protein X (E3BP) bound by non-covalent bonds. Thiamine diphosphate is required as a cofactor. The cofactor is Mg(2+). Post-translationally, phosphorylated at Ser-313 by pyruvate dehydrogenase kinases PKP1 (PDK1) and PKP2 (PDK2), and dephosphorylated by pyruvate dehydrogenase phosphatases PTC5 and PTC6.

Its subcellular location is the mitochondrion matrix. It carries out the reaction N(6)-[(R)-lipoyl]-L-lysyl-[protein] + pyruvate + H(+) = N(6)-[(R)-S(8)-acetyldihydrolipoyl]-L-lysyl-[protein] + CO2. With respect to regulation, E1 activity is regulated by phosphorylation (inactivation) and dephosphorylation (activation) of the alpha subunit. In terms of biological role, the pyruvate dehydrogenase complex catalyzes the overall conversion of pyruvate to acetyl-CoA and CO(2). In Saccharomyces cerevisiae (strain ATCC 204508 / S288c) (Baker's yeast), this protein is Pyruvate dehydrogenase E1 component subunit alpha, mitochondrial (PDA1).